Reading from the N-terminus, the 422-residue chain is MAM and fibronectin type III domain-containing protein 1 (422 aa).

The MAM domain occupies 1-75 (KFYYHMYGAT…VSLMEGICAG (75 aa)). Fibronectin type-III domains are found at residues 2 to 74 (FYYH…GICA), 196 to 286 (PGWN…QART), and 291 to 386 (PSRA…YIVT).

As to expression, component of the acid-insoluble and acid-soluble organic matrix of the aragonitic skeleton (at protein level).

Its subcellular location is the secreted. This Acropora millepora (Staghorn coral) protein is MAM and fibronectin type III domain-containing protein 1.